A 426-amino-acid polypeptide reads, in one-letter code: Glutamate-1-semialdehyde 2,1-aminomutase (426 aa).

Lysine 265 is modified (N6-(pyridoxal phosphate)lysine).

Belongs to the class-III pyridoxal-phosphate-dependent aminotransferase family. HemL subfamily. As to quaternary structure, homodimer. Pyridoxal 5'-phosphate serves as cofactor.

It localises to the cytoplasm. The catalysed reaction is (S)-4-amino-5-oxopentanoate = 5-aminolevulinate. The protein operates within porphyrin-containing compound metabolism; protoporphyrin-IX biosynthesis; 5-aminolevulinate from L-glutamyl-tRNA(Glu): step 2/2. The sequence is that of Glutamate-1-semialdehyde 2,1-aminomutase from Sodalis glossinidius (strain morsitans).